The chain runs to 204 residues: Urease accessory protein UreG (204 aa).

A GTP-binding site is contributed by 12–19 (GPVGSGKT).

The protein belongs to the SIMIBI class G3E GTPase family. UreG subfamily. In terms of assembly, homodimer. UreD, UreF and UreG form a complex that acts as a GTP-hydrolysis-dependent molecular chaperone, activating the urease apoprotein by helping to assemble the nickel containing metallocenter of UreC. The UreE protein probably delivers the nickel.

The protein localises to the cytoplasm. Functionally, facilitates the functional incorporation of the urease nickel metallocenter. This process requires GTP hydrolysis, probably effectuated by UreG. In Pseudomonas fluorescens (strain Pf0-1), this protein is Urease accessory protein UreG.